The primary structure comprises 294 residues: MGIRTFRPYTPSTRHMTVSNFEELSRDENGKRPRPEKSLLQFIHRKKGRNNRGVITCRHRGGGHKRLYRIIDFRRDKRGIPATVKTIEYDPNRSARICLVEYEDGEKRYILAPRNLEVGATIMAGPDAPFELGNAMPLERIPLGTVVHNVELYPGRGGQIVRAAGAGAQVVAKEGKYVSLKLPSGEVRMIRGECYATIGQVGNVDHSNLSLGKAGRSRWLGRRPHVRGSVMNPVDHPHGGGEGKAPIGRSTPVTPWGKPTLGYKTRKRNKPSNKFIVRGRRRGGRRDKSGRAAQ.

Disordered regions lie at residues 1–37 and 228–294; these read MGIR…RPEK and GSVM…RAAQ. Residues 10 to 22 show a composition bias toward polar residues; that stretch reads TPSTRHMTVSNFE. The segment covering 23–37 has biased composition (basic and acidic residues); the sequence is ELSRDENGKRPRPEK. Residues 264–285 are compositionally biased toward basic residues; that stretch reads KTRKRNKPSNKFIVRGRRRGGR.

Belongs to the universal ribosomal protein uL2 family. Part of the 50S ribosomal subunit. Forms a bridge to the 30S subunit in the 70S ribosome.

In terms of biological role, one of the primary rRNA binding proteins. Required for association of the 30S and 50S subunits to form the 70S ribosome, for tRNA binding and peptide bond formation. It has been suggested to have peptidyltransferase activity; this is somewhat controversial. Makes several contacts with the 16S rRNA in the 70S ribosome. The protein is Large ribosomal subunit protein uL2 of Synechococcus sp. (strain JA-3-3Ab) (Cyanobacteria bacterium Yellowstone A-Prime).